A 151-amino-acid chain; its full sequence is Actin-depolymerizing factor 10 (151 aa).

The region spanning 15-149 (PAWIEVPEKS…DLEVLRGRAN (135 aa)) is the ADF-H domain.

Belongs to the actin-binding proteins ADF family.

Actin-depolymerizing protein. Severs actin filaments (F-actin) and binds to actin monomers. In Oryza sativa subsp. japonica (Rice), this protein is Actin-depolymerizing factor 10 (ADF10).